A 475-amino-acid polypeptide reads, in one-letter code: NAD-dependent histone deacetylase sir2 (475 aa).

The span at 1–12 (MASNPLDNNMPT) shows a compositional bias: polar residues. The disordered stretch occupies residues 1 to 35 (MASNPLDNNMPTTPVEEKIPVASYSPSSSGSSSGA). Positions 20–35 (PVASYSPSSSGSSSGA) are enriched in low complexity. Ser55 is subject to Phosphoserine. A Deacetylase sirtuin-type domain is found at 139 to 436 (KLPHFNTFED…AGWLNELQAL (298 aa)). Residues 164-183 (GAGI…NGFY) and 246-249 (QNID) contribute to the NAD(+) site. The active-site Proton acceptor is His266. 4 residues coordinate Zn(2+): Cys274, Cys277, Cys298, and Cys301. Residues 373-375 (GTS), 398-400 (SRT), and Cys416 contribute to the NAD(+) site.

The protein belongs to the sirtuin family. Class I subfamily. The cofactor is Zn(2+).

Its subcellular location is the nucleus. It is found in the chromosome. The protein resides in the centromere. It localises to the telomere. The catalysed reaction is N(6)-acetyl-L-lysyl-[protein] + NAD(+) + H2O = 2''-O-acetyl-ADP-D-ribose + nicotinamide + L-lysyl-[protein]. In terms of biological role, involved in silencing within the mating-type region, at the telomeres, and according to PubMed:12867036 also within centromeric DNA regions. Required for the localization of swi6 to the telomeres, silent mating type region, and according to PubMed:12867036 to the centromeric DNA regions. According to PubMed:15545655 not required for the localization of swi6 to centromeric foci. Deacetylates histone H3 on 'Lys-9' and 'Lys-16' of histone H4. This has a direct role in heterochromatin assembly. The protein is NAD-dependent histone deacetylase sir2 (sir2) of Schizosaccharomyces pombe (strain 972 / ATCC 24843) (Fission yeast).